Consider the following 2280-residue polypeptide: Acetyl-CoA carboxylase (2280 aa).

The 510-residue stretch at 68-577 folds into the Biotin carboxylation domain; it reads VITSILIANN…TTGWLDRLIA (510 aa). The ATP-grasp domain occupies 226–418; the sequence is ETNIVTVDDD…LPAAQLQVAM (193 aa). 266–271 serves as a coordination point for ATP; it reads GGGGKG. 3 residues coordinate Mn(2+): Glu-375, Glu-389, and Asn-391. Arg-393 is an active-site residue. The Biotinyl-binding domain maps to 704–778; sequence LEQENDPTQL…DAGDILGILT (75 aa). Position 745 is an N6-biotinyllysine (Lys-745). 2 positions are modified to phosphoserine: Ser-1179 and Ser-1181. Residues 1524 to 1863 enclose the CoA carboxyltransferase N-terminal domain; it reads PYPTKEWLQP…KRNNPVPISP (340 aa). The carboxyltransferase stretch occupies residues 1524–2181; that stretch reads PYPTKEWLQP…EHYALQKITQ (658 aa). The CoA site is built by Arg-1772, Lys-2074, and Arg-2076. Positions 1867 to 2181 constitute a CoA carboxyltransferase C-terminal domain; the sequence is TWDRDVEFYP…EHYALQKITQ (315 aa).

As to quaternary structure, interacts with sad1. Requires biotin as cofactor. Mn(2+) is required as a cofactor.

The protein localises to the cytoplasm. The catalysed reaction is hydrogencarbonate + acetyl-CoA + ATP = malonyl-CoA + ADP + phosphate + H(+). It carries out the reaction N(6)-biotinyl-L-lysyl-[protein] + hydrogencarbonate + ATP = N(6)-carboxybiotinyl-L-lysyl-[protein] + ADP + phosphate + H(+). Its pathway is lipid metabolism; malonyl-CoA biosynthesis; malonyl-CoA from acetyl-CoA: step 1/1. With respect to regulation, by phosphorylation. Carries out three functions: biotin carboxyl carrier protein, biotin carboxylase and carboxyltransferase. This chain is Acetyl-CoA carboxylase (cut6), found in Schizosaccharomyces pombe (strain 972 / ATCC 24843) (Fission yeast).